Reading from the N-terminus, the 540-residue chain is RNA exonuclease 3 (540 aa).

The C3H1-type zinc finger occupies 7-34; it reads QFKHIVCPFLRTGRKCQSRNCFFSHDFQ. The Exonuclease domain maps to 382–529; sequence HCALDCELCY…EDAVSALQLV (148 aa).

It belongs to the REXO1/REXO3 family.

Its subcellular location is the cytoplasm. It localises to the nucleus. Its function is as follows. 3' to 5' exoribonuclease required for proper 3' end maturation of MRP RNA and of the U5L snRNA. This is RNA exonuclease 3 (rex3) from Schizosaccharomyces pombe (strain 972 / ATCC 24843) (Fission yeast).